Here is a 365-residue protein sequence, read N- to C-terminus: Pre-small/secreted glycoprotein (365 aa).

The signal sequence occupies residues M1–S32. N40 carries an N-linked (GlcNAc...) asparagine; by host glycan. 2 disulfides stabilise this stretch: C108-C135 and C121-C147. N204, N228, N257, and N268 each carry an N-linked (GlcNAc...) asparagine; by host glycan.

The protein belongs to the filoviruses glycoprotein family. As to quaternary structure, homodimer; disulfide-linked. The homodimers are linked by two disulfide bonds in a parallel orientation. Monomer. Post-translationally, this precursor is processed into mature sGP and delta-peptide by host furin or furin-like proteases. The cleavage site corresponds to the furin optimal cleavage sequence [KR]-X-[KR]-R. N-glycosylated. In terms of processing, O-glycosylated.

The protein resides in the secreted. In terms of biological role, seems to possess an anti-inflammatory activity as it can reverse the barrier-decreasing effects of TNF alpha. Might therefore contribute to the lack of inflammatory reaction seen during infection in spite the of extensive necrosis and massive virus production. Does not seem to be involved in activation of primary macrophages. Does not seem to interact specifically with neutrophils. Its function is as follows. Viroporin that permeabilizes mammalian cell plasma membranes. It acts by altering permeation of ionic compounds and small molecules. This activity may lead to viral enterotoxic activity. This is Pre-small/secreted glycoprotein (GP) from Epomops franqueti (Franquet's epauletted fruit bat).